Consider the following 364-residue polypeptide: DNA polymerase IV (364 aa).

The region spanning 14-198 (IIHIDMDAFF…LPIEKFHGVG (185 aa)) is the UmuC domain. Residues Asp-18 and Asp-116 each contribute to the Mg(2+) site. Residue Glu-117 is part of the active site.

The protein belongs to the DNA polymerase type-Y family. In terms of assembly, monomer. Requires Mg(2+) as cofactor.

The protein resides in the cytoplasm. It catalyses the reaction DNA(n) + a 2'-deoxyribonucleoside 5'-triphosphate = DNA(n+1) + diphosphate. In terms of biological role, poorly processive, error-prone DNA polymerase involved in untargeted mutagenesis. Copies undamaged DNA at stalled replication forks, which arise in vivo from mismatched or misaligned primer ends. These misaligned primers can be extended by PolIV. Exhibits no 3'-5' exonuclease (proofreading) activity. May be involved in translesional synthesis, in conjunction with the beta clamp from PolIII. This chain is DNA polymerase IV, found in Streptococcus pyogenes serotype M6 (strain ATCC BAA-946 / MGAS10394).